The chain runs to 621 residues: F-box/LRR-repeat protein 4 (621 aa).

The residue at position 28 (Arg-28) is an Asymmetric dimethylarginine. One can recognise an F-box domain in the interval 277 to 332; it reads NGYFDKLPYELIQLILNHLTLPDLCRLAQTCKLLSQHCCDPLQYIHLNLQPYWAKL. LRR repeat units lie at residues 376 to 397, 402 to 421, 427 to 448, 452 to 474, 480 to 501, 504 to 524, 532 to 558, 559 to 583, and 584 to 609; these read ELVR…EVIS, NLQA…AFNH, SLKR…SILN, ELQH…ASMI, KLRT…AELA, CPLL…STGC, LPNL…ACNC, TRLQ…LLES, and CKDL…LNAS.

As to quaternary structure, part of a SCF (SKP1-CUL1-F-box) protein ligase complex. Interacts with VCP. Interacts with PPTC7; this interaction promotes destruction of BNIP3 and NIX and mitophagy suppression. Expressed in heart, kidney, liver, lung, pancreas, and placenta, but not in skeletal muscle.

Its subcellular location is the cytoplasm. It is found in the nucleus. The protein resides in the mitochondrion outer membrane. Its function is as follows. Substrate-recognition component of the mitochondria-localized SCF-FBXL4 ubiquitin E3 ligase complex that plays a role in the restriction of mitophagy by controlling the degradation of BNIP3 and NIX mitophagy receptors. Rescues also mitochondrial injury through reverting hyperactivation of DRP1-mediated mitochondrial fission. The sequence is that of F-box/LRR-repeat protein 4 (FBXL4) from Homo sapiens (Human).